The sequence spans 45 residues: Osteocalcin 1 (45 aa).

The 41-residue stretch at 1-41 (AAGQLSLTQLESLREVCELNLACEHMMDTEGIIAAYTAYYG) folds into the Gla domain. Positions 11, 15, 18, and 24 each coordinate Ca(2+). 3 positions are modified to 4-carboxyglutamate: Glu-11, Glu-15, and Glu-18. An intrachain disulfide couples Cys-17 to Cys-23.

This sequence belongs to the osteocalcin/matrix Gla protein family. Gamma-carboxyglutamate residues are formed by vitamin K dependent carboxylation by GGCX. These residues are essential for the binding of calcium.

It localises to the secreted. Its function is as follows. The carboxylated form is one of the main organic components of the bone matrix, which constitutes 1-2% of the total bone protein. The carboxylated form binds strongly to apatite and calcium. This is Osteocalcin 1 from Diplodus sargus (White seabream).